We begin with the raw amino-acid sequence, 483 residues long: Altronate oxidoreductase (483 aa).

18–29 (IIQFGEGNFLRA) lines the NAD(+) pocket.

Belongs to the mannitol dehydrogenase family. UxaB subfamily.

It carries out the reaction D-altronate + NAD(+) = keto-D-tagaturonate + NADH + H(+). The protein operates within carbohydrate metabolism; pentose and glucuronate interconversion. This Escherichia coli O157:H7 protein is Altronate oxidoreductase (uxaB).